We begin with the raw amino-acid sequence, 167 residues long: Gametocyte-specific factor 1 homolog (167 aa).

2 CHHC U11-48K-type zinc fingers span residues 1–28 and 34–61; these read MVYC…RVIY and LMVC…EDRN. The Zn(2+) site is built by C4, H10, H20, C24, C37, H43, H53, and C57. The span at 128-161 shows a compositional bias: basic and acidic residues; that stretch reads EKRRHFGEDYEEEKKPRKAKARADLRPTPYEHRR. A disordered region spans residues 128–167; it reads EKRRHFGEDYEEEKKPRKAKARADLRPTPYEHRRPYSRRQ.

This sequence belongs to the UPF0224 (FAM112) family. As to quaternary structure, interacts with piwi.

It is found in the nucleus. Acts via the piwi-interacting RNA (piRNA) pathway which mediates the repression of transposable elements during meiosis by forming complexes composed of piRNAs and piwi proteins and governs the methylation and subsequent repression of transposons. Required for repression of transposons and neighboring genes in ovarian somatic and germline cells. The protein is Gametocyte-specific factor 1 homolog of Drosophila melanogaster (Fruit fly).